A 266-amino-acid chain; its full sequence is Adaptin ear-binding coat-associated protein 2 (266 aa).

2 disordered regions span residues 165–198 and 245–266; these read MRKK…KSST and DFTK…WVQF. S181 carries the phosphoserine modification. Short sequence motifs (WXXF motif) lie at residues 243 to 246 and 263 to 266; these read WGDF and WVQF. The segment covering 249–266 has biased composition (low complexity); it reads STGSPSSQSQPGTGWVQF.

Belongs to the NECAP family. As to quaternary structure, interacts with AP1G1 and AP2A1 components of the adapter protein complexes AP-1 and AP-2. Interacts with the GAE domain proteins GGA1, GGA2 and GGA3. In terms of tissue distribution, expressed in brain, heart, kidney, liver, lung, skeletal muscles and testis (at protein level).

The protein resides in the cytoplasmic vesicle. It is found in the clathrin-coated vesicle membrane. It localises to the cell membrane. Functionally, involved in endocytosis. The sequence is that of Adaptin ear-binding coat-associated protein 2 (Necap2) from Mus musculus (Mouse).